A 327-amino-acid chain; its full sequence is Malate dehydrogenase (327 aa).

Position 11–17 (11–17) interacts with NAD(+); sequence GAAGQIS. Residues Arg92 and Arg98 each contribute to the substrate site. Residues Asn105, Gln112, and 129–131 each bind NAD(+); that span reads VGN. Asn131 and Arg162 together coordinate substrate. The Proton acceptor role is filled by His187.

The protein belongs to the LDH/MDH superfamily. MDH type 2 family.

It carries out the reaction (S)-malate + NAD(+) = oxaloacetate + NADH + H(+). Its function is as follows. Catalyzes the reversible oxidation of malate to oxaloacetate. This chain is Malate dehydrogenase, found in Nitrosomonas europaea (strain ATCC 19718 / CIP 103999 / KCTC 2705 / NBRC 14298).